A 203-amino-acid polypeptide reads, in one-letter code: Dephospho-CoA kinase (203 aa).

In terms of domain architecture, DPCK spans 5 to 203; the sequence is IVGLTGGIAS…VVYRVAASEH (199 aa). An ATP-binding site is contributed by 13–18; it reads ASGKSA.

Belongs to the CoaE family.

It localises to the cytoplasm. It catalyses the reaction 3'-dephospho-CoA + ATP = ADP + CoA + H(+). The protein operates within cofactor biosynthesis; coenzyme A biosynthesis; CoA from (R)-pantothenate: step 5/5. In terms of biological role, catalyzes the phosphorylation of the 3'-hydroxyl group of dephosphocoenzyme A to form coenzyme A. The sequence is that of Dephospho-CoA kinase from Xanthomonas euvesicatoria pv. vesicatoria (strain 85-10) (Xanthomonas campestris pv. vesicatoria).